The sequence spans 878 residues: Leucine--tRNA ligase (878 aa).

A 'HIGH' region motif is present at residues 43–53 (PYPSGRIHMGH). The short motif at 630–634 (KMSKS) is the 'KMSKS' region element. Lysine 633 contributes to the ATP binding site.

It belongs to the class-I aminoacyl-tRNA synthetase family.

The protein resides in the cytoplasm. The enzyme catalyses tRNA(Leu) + L-leucine + ATP = L-leucyl-tRNA(Leu) + AMP + diphosphate. The chain is Leucine--tRNA ligase from Rhodopseudomonas palustris (strain BisB5).